A 173-amino-acid polypeptide reads, in one-letter code: U1 small nuclear ribonucleoprotein C (173 aa).

The Matrin-type zinc-finger motif lies at Tyr-4–Phe-36. Positions Ala-72–Gly-100 are disordered. The segment covering Ala-73–Pro-94 has biased composition (pro residues).

Belongs to the U1 small nuclear ribonucleoprotein C family. In terms of assembly, U1 snRNP is composed of the 7 core Sm proteins B/B', D1, D2, D3, E, F and G that assemble in a heptameric protein ring on the Sm site of the small nuclear RNA to form the core snRNP, and at least 3 U1 snRNP-specific proteins U1-70K, U1-A and U1-C. U1-C interacts with U1 snRNA and the 5' splice-site region of the pre-mRNA.

It localises to the nucleus. Component of the spliceosomal U1 snRNP, which is essential for recognition of the pre-mRNA 5' splice-site and the subsequent assembly of the spliceosome. U1-C is directly involved in initial 5' splice-site recognition for both constitutive and regulated alternative splicing. The interaction with the 5' splice-site seems to precede base-pairing between the pre-mRNA and the U1 snRNA. Stimulates commitment or early (E) complex formation by stabilizing the base pairing of the 5' end of the U1 snRNA and the 5' splice-site region. This chain is U1 small nuclear ribonucleoprotein C, found in Pediculus humanus subsp. corporis (Body louse).